Consider the following 447-residue polypeptide: Cysteine--tRNA ligase (447 aa).

Cys28 serves as a coordination point for Zn(2+). Residues 30–40 carry the 'HIGH' region motif; it reads PTVYNYIHIGN. Cys211, His236, and Glu240 together coordinate Zn(2+). Positions 268–272 match the 'KMSKS' region motif; the sequence is KMSKS. ATP is bound at residue Lys271.

This sequence belongs to the class-I aminoacyl-tRNA synthetase family. In terms of assembly, monomer. It depends on Zn(2+) as a cofactor.

It is found in the cytoplasm. It carries out the reaction tRNA(Cys) + L-cysteine + ATP = L-cysteinyl-tRNA(Cys) + AMP + diphosphate. The chain is Cysteine--tRNA ligase from Streptococcus agalactiae serotype Ia (strain ATCC 27591 / A909 / CDC SS700).